A 379-amino-acid chain; its full sequence is Beta-1,3-N-acetylglucosaminyltransferase lunatic fringe (379 aa).

Residues 1-8 (MLKRCGRR) lie on the Cytoplasmic side of the membrane. The helical; Signal-anchor for type II membrane protein transmembrane segment at 9 to 29 (LLLALAGALLACLLVLTADPP) threads the bilayer. The Lumenal segment spans residues 30–379 (PPPLPAERGR…TPWCPRTAIF (350 aa)). The interval 86–107 (RDAGPPPGAAPRPADGHPRPLA) is disordered. Substrate is bound at residue arginine 129. Residue asparagine 167 is glycosylated (N-linked (GlcNAc...) asparagine). Cystine bridges form between cysteine 168/cysteine 179 and cysteine 197/cysteine 260. Residue aspartate 201 participates in substrate binding. Aspartate 202 is a Mn(2+) binding site. Aspartate 290 is a catalytic residue. Mn(2+) is bound at residue histidine 314. The cysteines at positions 364 and 373 are disulfide-linked.

This sequence belongs to the glycosyltransferase 31 family. The cofactor is Mn(2+). Co(2+) serves as cofactor. A soluble form may be derived from the membrane form by proteolytic processing.

The protein localises to the golgi apparatus. The protein resides in the golgi apparatus membrane. The enzyme catalyses 3-O-(alpha-L-fucosyl)-L-threonyl-[EGF-like domain protein] + UDP-N-acetyl-alpha-D-glucosamine = 3-O-(N-acetyl-beta-D-glucosaminyl-(1-&gt;3)-alpha-L-fucosyl)-L-threonyl-[EGF-like domain protein] + UDP + H(+). It catalyses the reaction 3-O-(alpha-L-fucosyl)-L-seryl-[EGF-like domain protein] + UDP-N-acetyl-alpha-D-glucosamine = 3-O-(N-acetyl-beta-D-glucosaminyl-(1-&gt;3)-alpha-L-fucosyl)-L-seryl-[EGF-like domain protein] + UDP + H(+). Glycosyltransferase that initiates the elongation of O-linked fucose residues attached to EGF-like repeats in the extracellular domain of Notch molecules. Modulates NOTCH1 activity by modifying O-fucose residues at specific EGF-like domains resulting in inhibition of NOTCH1 activation by JAG1 and enhancement of NOTCH1 activation by DLL1 via an increase in its binding to DLL1. Decreases the binding of JAG1 to NOTCH2 but not that of DLL1. Essential mediator of somite segmentation and patterning. The chain is Beta-1,3-N-acetylglucosaminyltransferase lunatic fringe from Homo sapiens (Human).